Consider the following 408-residue polypeptide: Peptidase T (408 aa).

The segment at 1-28 (MKNQLIDRLTRYTTIDTQSDPKSTTTPS) is disordered. Residues 11–28 (RYTTIDTQSDPKSTTTPS) are compositionally biased toward polar residues. H78 is a Zn(2+) binding site. Residue D80 is part of the active site. D140 contributes to the Zn(2+) binding site. E174 acts as the Proton acceptor in catalysis. Residues E175, D197, and H379 each contribute to the Zn(2+) site.

It belongs to the peptidase M20B family. The cofactor is Zn(2+).

The protein localises to the cytoplasm. It carries out the reaction Release of the N-terminal residue from a tripeptide.. Cleaves the N-terminal amino acid of tripeptides. In Staphylococcus aureus (strain USA300 / TCH1516), this protein is Peptidase T.